Here is an 88-residue protein sequence, read N- to C-terminus: Small ribosomal subunit protein uS15 (88 aa).

The protein belongs to the universal ribosomal protein uS15 family. As to quaternary structure, part of the 30S ribosomal subunit. Forms a bridge to the 50S subunit in the 70S ribosome, contacting the 23S rRNA.

Its function is as follows. One of the primary rRNA binding proteins, it binds directly to 16S rRNA where it helps nucleate assembly of the platform of the 30S subunit by binding and bridging several RNA helices of the 16S rRNA. Forms an intersubunit bridge (bridge B4) with the 23S rRNA of the 50S subunit in the ribosome. This Flavobacterium psychrophilum (strain ATCC 49511 / DSM 21280 / CIP 103535 / JIP02/86) protein is Small ribosomal subunit protein uS15.